The primary structure comprises 229 residues: uncharacterized protein (229 aa).

The S4 RNA-binding domain maps to 2-69 (QRLAKIISNA…KPRLWIYYKP (68 aa)). Residue D102 is the Nucleophile of the active site.

The protein belongs to the pseudouridine synthase RsuA family.

It carries out the reaction a uridine in RNA = a pseudouridine in RNA. This is an uncharacterized protein from Rickettsia felis (strain ATCC VR-1525 / URRWXCal2) (Rickettsia azadi).